Consider the following 27-residue polypeptide: Potassium channel toxin kappa-KTx 2.2 (27 aa).

2 disulfide bridges follow: Cys-3-Cys-21 and Cys-7-Cys-17.

Belongs to the short scorpion toxin superfamily. Potassium channel inhibitor kappa-KTx family. Kappa-KTx 2 subfamily. As to expression, expressed by the venom gland.

The protein resides in the secreted. Its function is as follows. OmTx1 decreases the amplitude of the potassium current of the rat channels Kv1.1/KCNA1 by 17% and Kv1.2/KCNA2 by 12% as well as human Kv1.3/KCNA3 by 24%. In terms of biological role, omTx2 decreases the amplitude of the potassium current of the rat channels Kv1.1/KCNA1 by 8% and Kv1.2/KCNA2 by 10% as well as human Kv1.3/KCNA3 by 36%. Also alters glucose-induced insulin release from pancreatic islets. In Opisthacanthus madagascariensis (Scorpion), this protein is Potassium channel toxin kappa-KTx 2.2.